The sequence spans 149 residues: Nascent polypeptide-associated complex subunit beta-2 (149 aa).

Residues 38–103 (DKDNTKLQAE…PKENTLNGLY (66 aa)) enclose the NAC-A/B domain.

This sequence belongs to the NAC-beta family. As to quaternary structure, part of the nascent polypeptide-associated complex (NAC), consisting of EGD2 and either EGD1 or BTT1. NAC associates with ribosomes via EGD1 or BTT1.

It is found in the cytoplasm. It localises to the nucleus. In terms of biological role, acts as a component of the nascent polypeptide-associated complex (NAC), which promotes mitochondrial protein import by enhancing productive ribosome interactions with the outer mitochondrial membrane. Also blocks the inappropriate interaction of ribosomes translating non-secretory nascent polypeptides with translocation sites in the membrane of the endoplasmic reticulum. BTT1 may act as a transcription factor that exert a negative effect on the expression of several genes that are transcribed by RNA polymerase II. The sequence is that of Nascent polypeptide-associated complex subunit beta-2 (BTT1) from Saccharomyces cerevisiae (strain ATCC 204508 / S288c) (Baker's yeast).